The primary structure comprises 180 residues: Ribulose bisphosphate carboxylase small subunit, chloroplastic (180 aa).

A chloroplast-targeting transit peptide spans 1 to 56; the sequence is MASSVLSSAAVATRSNVAQANMVAPFTGLKSAASFPVSRKQNLDITSIASNGGRVQ.

It belongs to the RuBisCO small chain family. In terms of assembly, heterohexadecamer of 8 large and 8 small subunits.

The protein localises to the plastid. Its subcellular location is the chloroplast. Functionally, ruBisCO catalyzes two reactions: the carboxylation of D-ribulose 1,5-bisphosphate, the primary event in carbon dioxide fixation, as well as the oxidative fragmentation of the pentose substrate. Both reactions occur simultaneously and in competition at the same active site. Although the small subunit is not catalytic it is essential for maximal activity. The polypeptide is Ribulose bisphosphate carboxylase small subunit, chloroplastic (Nicotiana plumbaginifolia (Leadwort-leaved tobacco)).